A 103-amino-acid chain; its full sequence is MSALTKASGALKSVDYEVFGRVQGVCFRMYTEEEARKLGVVGWVKNTRQGTVTGQVQGPEDKVNAMKSWLSKVGSPSSRIDRTNFSNEKEISKLDFSGFSTRY.

Residue Ser-2 is modified to N-acetylserine. The Acylphosphatase-like domain occupies 13 to 103; it reads SVDYEVFGRV…LDFSGFSTRY (91 aa). Residue Cys-26 is modified to S-glutathionyl cysteine; alternate. Active-site residues include Arg-28 and Asn-46.

It belongs to the acylphosphatase family. As to quaternary structure, monomer (TU1) or homodimer (TU3) in absence of reducing factors; disulfide linked.

The enzyme catalyses an acyl phosphate + H2O = a carboxylate + phosphate + H(+). Functionally, its physiological role is not yet clear. This chain is Acylphosphatase-2 (ACYP2), found in Meleagris gallopavo (Wild turkey).